The primary structure comprises 754 residues: 5-methyltetrahydropteroyltriglutamate--homocysteine methyltransferase (754 aa).

Residues 17–20 and Lys-117 each bind 5-methyltetrahydropteroyltri-L-glutamate; that span reads RELK. Residues 431–433 and Glu-484 contribute to the L-homocysteine site; that span reads IGS. L-methionine is bound by residues 431–433 and Glu-484; that span reads IGS. 5-methyltetrahydropteroyltri-L-glutamate-binding positions include 515–516 and Trp-561; that span reads RC. An L-homocysteine-binding site is contributed by Asp-599. Asp-599 is an L-methionine binding site. Residue Glu-605 participates in 5-methyltetrahydropteroyltri-L-glutamate binding. Residues His-641, Cys-643, and Glu-665 each contribute to the Zn(2+) site. The Proton donor role is filled by His-694. Cys-726 is a Zn(2+) binding site.

It belongs to the vitamin-B12 independent methionine synthase family. Zn(2+) serves as cofactor.

It catalyses the reaction 5-methyltetrahydropteroyltri-L-glutamate + L-homocysteine = tetrahydropteroyltri-L-glutamate + L-methionine. It functions in the pathway amino-acid biosynthesis; L-methionine biosynthesis via de novo pathway; L-methionine from L-homocysteine (MetE route): step 1/1. In terms of biological role, catalyzes the transfer of a methyl group from 5-methyltetrahydrofolate to homocysteine resulting in methionine formation. This is 5-methyltetrahydropteroyltriglutamate--homocysteine methyltransferase from Pectobacterium atrosepticum (strain SCRI 1043 / ATCC BAA-672) (Erwinia carotovora subsp. atroseptica).